Here is a 100-residue protein sequence, read N- to C-terminus: NADH-quinone oxidoreductase subunit K (100 aa).

3 helical membrane-spanning segments follow: residues 4–24, 28–48, and 60–80; these read LQHG…GLLI, LLFM…AFVV, and VMYI…LALL.

It belongs to the complex I subunit 4L family. In terms of assembly, NDH-1 is composed of 13 different subunits. Subunits NuoA, H, J, K, L, M, N constitute the membrane sector of the complex.

The protein localises to the cell inner membrane. The enzyme catalyses a quinone + NADH + 5 H(+)(in) = a quinol + NAD(+) + 4 H(+)(out). Its function is as follows. NDH-1 shuttles electrons from NADH, via FMN and iron-sulfur (Fe-S) centers, to quinones in the respiratory chain. The immediate electron acceptor for the enzyme in this species is believed to be ubiquinone. Couples the redox reaction to proton translocation (for every two electrons transferred, four hydrogen ions are translocated across the cytoplasmic membrane), and thus conserves the redox energy in a proton gradient. The polypeptide is NADH-quinone oxidoreductase subunit K (Pectobacterium carotovorum subsp. carotovorum (strain PC1)).